Here is a 386-residue protein sequence, read N- to C-terminus: Ovalbumin (386 aa).

N-acetylglycine is present on Gly2. A signal peptide (not cleaved) is located at residues His22 to Asp48. Phosphoserine is present on Ser69. Cys74 and Cys121 are oxidised to a cystine. Glu192 provides a ligand contact to Ca(2+). Asn293 carries N-linked (GlcNAc...) asparagine glycosylation. The residue at position 345 (Ser345) is a Phosphoserine.

The protein belongs to the serpin family. Ov-serpin subfamily. As to quaternary structure, homodimer. Undergoes proteolytic cleavage first at the canonical P1-P1' site, and then at the P8-P7 site by subtilisin. In terms of tissue distribution, major protein of egg white. Expressed in the magnum of the oviduct (at protein level).

The protein resides in the secreted. In terms of biological role, non-inhibitory serpin. Storage protein of egg white. The polypeptide is Ovalbumin (SERPINB14) (Gallus gallus (Chicken)).